Consider the following 244-residue polypeptide: Protein A47 (244 aa).

Belongs to the orthopoxvirus A47 protein family.

This chain is Protein A47, found in Homo sapiens (Human).